The sequence spans 542 residues: Gamma-terpinene synthase 1 (542 aa).

2 residues coordinate Mn(2+): D295 and D299. Positions 295 to 299 match the DDXXD motif motif; that stretch reads DDVYD. Homodimerization regions lie at residues 301–307 and 373–410; these read YDTLDEL and EAKW…FTLP. 2 residues coordinate Mn(2+): D439 and E447.

This sequence belongs to the terpene synthase family. As to quaternary structure, homodimer. The cofactor is Mn(2+). It depends on Mg(2+) as a cofactor. In terms of tissue distribution, mostly expressed in flowers and, to a lower extent, in leaves, especially in glandular trichomes.

The enzyme catalyses (2E)-geranyl diphosphate = gamma-terpinene + diphosphate. It catalyses the reaction (2E)-geranyl diphosphate = alpha-terpinene + diphosphate. It participates in secondary metabolite biosynthesis; terpenoid biosynthesis. In terms of biological role, involved in the biosynthesis of phenolic monoterpenes natural products thymol and carvacrol which have a broad range of biological activities acting as antimicrobial compounds, insecticides, antioxidants and pharmaceutical agents. Monoterpene synthase which catalyzes the conversion of geranyl diphosphate (GPP) to gamma-terpinene and the minor products alpha-thujene, alpha-terpinene, myrcene, sabinene, (+)-R-limonene, alpha-pinene and alpha-phellandrene. The chain is Gamma-terpinene synthase 1 from Thymus vulgaris (Thyme).